The primary structure comprises 970 residues: Bifunctional glutamine synthetase adenylyltransferase/adenylyl-removing enzyme (970 aa).

An adenylyl removase region spans residues 1-454 (MNSLPPRPSL…HFQQVFAAPQ (454 aa)). The segment at 468–970 (QAVLASIWAG…WRRVMEEGKA (503 aa)) is adenylyl transferase.

The protein belongs to the GlnE family. Requires Mg(2+) as cofactor.

It carries out the reaction [glutamine synthetase]-O(4)-(5'-adenylyl)-L-tyrosine + phosphate = [glutamine synthetase]-L-tyrosine + ADP. It catalyses the reaction [glutamine synthetase]-L-tyrosine + ATP = [glutamine synthetase]-O(4)-(5'-adenylyl)-L-tyrosine + diphosphate. In terms of biological role, involved in the regulation of glutamine synthetase GlnA, a key enzyme in the process to assimilate ammonia. When cellular nitrogen levels are high, the C-terminal adenylyl transferase (AT) inactivates GlnA by covalent transfer of an adenylyl group from ATP to specific tyrosine residue of GlnA, thus reducing its activity. Conversely, when nitrogen levels are low, the N-terminal adenylyl removase (AR) activates GlnA by removing the adenylyl group by phosphorolysis, increasing its activity. The regulatory region of GlnE binds the signal transduction protein PII (GlnB) which indicates the nitrogen status of the cell. This chain is Bifunctional glutamine synthetase adenylyltransferase/adenylyl-removing enzyme, found in Thioalkalivibrio sulfidiphilus (strain HL-EbGR7).